The chain runs to 284 residues: Diaminopimelate epimerase (284 aa).

Residues N21, Q54, and N74 each coordinate substrate. Residue C83 is the Proton donor of the active site. Substrate contacts are provided by residues 84–85 (GN), N167, N200, and 218–219 (ER). The Proton acceptor role is filled by C227. 228-229 (GS) contacts substrate.

It belongs to the diaminopimelate epimerase family. Homodimer.

Its subcellular location is the cytoplasm. It carries out the reaction (2S,6S)-2,6-diaminopimelate = meso-2,6-diaminopimelate. It functions in the pathway amino-acid biosynthesis; L-lysine biosynthesis via DAP pathway; DL-2,6-diaminopimelate from LL-2,6-diaminopimelate: step 1/1. Its function is as follows. Catalyzes the stereoinversion of LL-2,6-diaminopimelate (L,L-DAP) to meso-diaminopimelate (meso-DAP), a precursor of L-lysine and an essential component of the bacterial peptidoglycan. The chain is Diaminopimelate epimerase from Buchnera aphidicola subsp. Acyrthosiphon pisum (strain APS) (Acyrthosiphon pisum symbiotic bacterium).